We begin with the raw amino-acid sequence, 298 residues long: ATP phosphoribosyltransferase (298 aa).

The protein belongs to the ATP phosphoribosyltransferase family. Long subfamily. Mg(2+) is required as a cofactor.

The protein resides in the cytoplasm. The enzyme catalyses 1-(5-phospho-beta-D-ribosyl)-ATP + diphosphate = 5-phospho-alpha-D-ribose 1-diphosphate + ATP. The protein operates within amino-acid biosynthesis; L-histidine biosynthesis; L-histidine from 5-phospho-alpha-D-ribose 1-diphosphate: step 1/9. Its activity is regulated as follows. Feedback inhibited by histidine. Its function is as follows. Catalyzes the condensation of ATP and 5-phosphoribose 1-diphosphate to form N'-(5'-phosphoribosyl)-ATP (PR-ATP). Has a crucial role in the pathway because the rate of histidine biosynthesis seems to be controlled primarily by regulation of HisG enzymatic activity. The protein is ATP phosphoribosyltransferase of Aliivibrio salmonicida (strain LFI1238) (Vibrio salmonicida (strain LFI1238)).